The primary structure comprises 314 residues: tRNA uridine(34) hydroxylase (314 aa).

The Rhodanese domain occupies 140–234 (ARDDVILIDT…YLEETPPDES (95 aa)). C194 acts as the Cysteine persulfide intermediate in catalysis.

This sequence belongs to the TrhO family.

The enzyme catalyses uridine(34) in tRNA + AH2 + O2 = 5-hydroxyuridine(34) in tRNA + A + H2O. Its function is as follows. Catalyzes oxygen-dependent 5-hydroxyuridine (ho5U) modification at position 34 in tRNAs. In Acinetobacter baumannii (strain SDF), this protein is tRNA uridine(34) hydroxylase.